Here is a 405-residue protein sequence, read N- to C-terminus: Argininosuccinate synthase (405 aa).

Position 11 to 19 (11 to 19) interacts with ATP; it reads AYSGGLDTS. Position 90 (tyrosine 90) interacts with L-citrulline. An ATP-binding site is contributed by glycine 119. L-aspartate is bound by residues threonine 121, asparagine 125, and aspartate 126. Residue asparagine 125 participates in L-citrulline binding. Residues arginine 129, serine 178, serine 187, glutamate 263, and tyrosine 275 each coordinate L-citrulline.

It belongs to the argininosuccinate synthase family. Type 1 subfamily. In terms of assembly, homotetramer.

It localises to the cytoplasm. The catalysed reaction is L-citrulline + L-aspartate + ATP = 2-(N(omega)-L-arginino)succinate + AMP + diphosphate + H(+). It functions in the pathway amino-acid biosynthesis; L-arginine biosynthesis; L-arginine from L-ornithine and carbamoyl phosphate: step 2/3. This Legionella pneumophila subsp. pneumophila (strain Philadelphia 1 / ATCC 33152 / DSM 7513) protein is Argininosuccinate synthase.